The chain runs to 138 residues: Acidic phospholipase A2 BE-I-PLA2 (138 aa).

The N-terminal stretch at 1-16 is a signal peptide; it reads MRTLWIMAVLLVGVEG. 7 disulfide bridges follow: cysteine 42–cysteine 131, cysteine 44–cysteine 60, cysteine 59–cysteine 111, cysteine 65–cysteine 138, cysteine 66–cysteine 104, cysteine 73–cysteine 97, and cysteine 91–cysteine 102. Positions 43, 45, and 47 each coordinate Ca(2+). Histidine 63 is a catalytic residue. Position 64 (aspartate 64) interacts with Ca(2+). Aspartate 105 is a catalytic residue.

Belongs to the phospholipase A2 family. Group II subfamily. D49 sub-subfamily. It depends on Ca(2+) as a cofactor. In terms of tissue distribution, expressed by the venom gland.

It is found in the secreted. The catalysed reaction is a 1,2-diacyl-sn-glycero-3-phosphocholine + H2O = a 1-acyl-sn-glycero-3-phosphocholine + a fatty acid + H(+). Its function is as follows. Snake venom phospholipase A2 that shows a potent inhibition of human platelet aggregation. This inhibition is concentration-dependent when aggregation is induced by collagen, and concentration-independent when aggregation is induced by arachidonic acid. In human umbilical-cord vein endothelial cells, this toxin stimulates endothelial cells to release prostaglandin I(2), suggesting an increase of its potential anti-platelet activity in vivo. PLA2 catalyzes the calcium-dependent hydrolysis of the 2-acyl groups in 3-sn-phosphoglycerides. The polypeptide is Acidic phospholipase A2 BE-I-PLA2 (Bothrops erythromelas (Caatinga lance head)).